The chain runs to 190 residues: Potassium-transporting ATPase KdpC subunit (190 aa).

Residues 10–30 (TFIFLLLITGGVYPLLTTALG) traverse the membrane as a helical segment.

Belongs to the KdpC family. The system is composed of three essential subunits: KdpA, KdpB and KdpC.

It is found in the cell inner membrane. Its function is as follows. Part of the high-affinity ATP-driven potassium transport (or Kdp) system, which catalyzes the hydrolysis of ATP coupled with the electrogenic transport of potassium into the cytoplasm. This subunit acts as a catalytic chaperone that increases the ATP-binding affinity of the ATP-hydrolyzing subunit KdpB by the formation of a transient KdpB/KdpC/ATP ternary complex. This is Potassium-transporting ATPase KdpC subunit from Escherichia coli O9:H4 (strain HS).